Reading from the N-terminus, the 60-residue chain is Metallothionein (60 aa).

Position 1 is an N-acetylmethionine (M1). Positions 1–28 (MDPCECSKTGTCNCGGSCTCKNCSCTTC) are beta. 20 residues coordinate a divalent metal cation: C4, C6, C12, C14, C18, C20, C23, C25, C28, C32, C33, C35, C36, C40, C43, C47, C49, C54, C58, and C59. The interval 29 to 60 (TKSCCPCCPSGCPKCASGCVCKGKTCDTTCCQ) is alpha.

This sequence belongs to the metallothionein superfamily. Type 1 family.

Its function is as follows. Metallothioneins have a high content of cysteine residues that bind various heavy metals. This Pseudopleuronectes americanus (Winter flounder) protein is Metallothionein (mt).